Reading from the N-terminus, the 409-residue chain is Tyrosine--tRNA ligase (409 aa).

Tyrosine 35 provides a ligand contact to L-tyrosine. A 'HIGH' region motif is present at residues 40 to 49 (PTGSSLHVGH). Residues tyrosine 168 and glutamine 172 each contribute to the L-tyrosine site. The short motif at 228–232 (KMGKT) is the 'KMSKS' region element. Lysine 231 provides a ligand contact to ATP. In terms of domain architecture, S4 RNA-binding spans 339–404 (IKVTDLFVQV…AGKKRVVRIV (66 aa)).

It belongs to the class-I aminoacyl-tRNA synthetase family. TyrS type 1 subfamily. As to quaternary structure, homodimer.

It localises to the cytoplasm. It carries out the reaction tRNA(Tyr) + L-tyrosine + ATP = L-tyrosyl-tRNA(Tyr) + AMP + diphosphate + H(+). In terms of biological role, catalyzes the attachment of tyrosine to tRNA(Tyr) in a two-step reaction: tyrosine is first activated by ATP to form Tyr-AMP and then transferred to the acceptor end of tRNA(Tyr). The protein is Tyrosine--tRNA ligase of Treponema pallidum (strain Nichols).